The primary structure comprises 286 residues: 4-hydroxybenzoate octaprenyltransferase (286 aa).

Transmembrane regions (helical) follow at residues 20 to 40, 43 to 63, 96 to 116, 142 to 162, 167 to 187, 210 to 230, 235 to 255, and 266 to 286; these read IGTLLLLWPCLMALVLAAGGM, LKVLIIFIIGVVIMRACGCII, LFVILGLAAFGLVLLLNGLVV, FLGVVWSWSIPMAYAAQTGEV, WWLFAANWFWTVAYDTMYAMV, QIIGLFQIAALFCFVAAGWSA, VYGLGLLTFVGFSTYQQMLIF, and FLNNNWAGLVLFVSLGADYLF.

Belongs to the UbiA prenyltransferase family. It depends on Mg(2+) as a cofactor.

Its subcellular location is the cell inner membrane. It catalyses the reaction all-trans-octaprenyl diphosphate + 4-hydroxybenzoate = 4-hydroxy-3-(all-trans-octaprenyl)benzoate + diphosphate. Its pathway is cofactor biosynthesis; ubiquinone biosynthesis. Catalyzes the prenylation of para-hydroxybenzoate (PHB) with an all-trans polyprenyl group. Mediates the second step in the final reaction sequence of ubiquinone-8 (UQ-8) biosynthesis, which is the condensation of the polyisoprenoid side chain with PHB, generating the first membrane-bound Q intermediate 3-octaprenyl-4-hydroxybenzoate. This is 4-hydroxybenzoate octaprenyltransferase from Shewanella oneidensis (strain ATCC 700550 / JCM 31522 / CIP 106686 / LMG 19005 / NCIMB 14063 / MR-1).